We begin with the raw amino-acid sequence, 180 residues long: MGLTISSLFSRLFGKKQMRILMVGLDAAGKTTILYKLKLGEIVTTIPTIGFNVETVEYKNICFTVWDVGGQDKIRPLWRHYFQNTQGLIFVVDSNDRERIQEGAAVLQKMLLEDELQDAVLLLFANKQDLPNAMAISEMTDKLGLQSLRNRTWYVQATCATQGTGLYEGLDWLSNELSKR.

Gly-2 carries N-myristoyl glycine lipidation. GTP-binding positions include 24 to 31 (GLDAAGKT), 67 to 71 (DVGGQ), and 126 to 129 (NKQD). A Phosphoserine modification is found at Ser-147.

The protein belongs to the small GTPase superfamily. Arf family. In terms of assembly, forms a complex containing RAB11A, ASAP1, RAB3IP, RAP11FIP3 and ARF4; the complex promotes preciliary trafficking; the complex binds to RHO in photoreceptor cells and promotes RHO ciliary transport.

It is found in the golgi apparatus. It localises to the membrane. In terms of biological role, GTP-binding protein that functions as an allosteric activator of the cholera toxin catalytic subunit, an ADP-ribosyltransferase. Involved in protein trafficking; may modulate vesicle budding and uncoating within the Golgi apparatus. Part of the ciliary targeting complex containing Rab11, ASAP1, Rabin8/RAB3IP, RAB11FIP3 and ARF4, which direct preciliary vesicle trafficking to mother centriole and ciliogenesis initiation. This Mus musculus (Mouse) protein is ADP-ribosylation factor 4 (Arf4).